The sequence spans 239 residues: Pimeloyl-[acyl-carrier protein] methyl ester esterase (239 aa).

Substrate is bound by residues Trp20, 77–78, and 138–142; these read SM and FISLQ. The active-site Nucleophile is Ser77. Catalysis depends on residues Asp192 and His220. His220 is a binding site for substrate.

It belongs to the AB hydrolase superfamily. Carboxylesterase BioH family. Monomer.

Its subcellular location is the cytoplasm. It carries out the reaction 6-carboxyhexanoyl-[ACP] methyl ester + H2O = 6-carboxyhexanoyl-[ACP] + methanol + H(+). It functions in the pathway cofactor biosynthesis; biotin biosynthesis. Its function is as follows. The physiological role of BioH is to remove the methyl group introduced by BioC when the pimeloyl moiety is complete. It allows to synthesize pimeloyl-ACP via the fatty acid synthetic pathway through the hydrolysis of the ester bonds of pimeloyl-ACP esters. The polypeptide is Pimeloyl-[acyl-carrier protein] methyl ester esterase (Legionella pneumophila (strain Lens)).